A 104-amino-acid chain; its full sequence is Guanidinium exporter (104 aa).

Met-1 is a topological domain (cytoplasmic). A helical transmembrane segment spans residues 2-19 (AWIILVIAGLLEVIWAIG). The Periplasmic portion of the chain corresponds to 20–28 (LKYSHGFSR). A helical membrane pass occupies residues 29 to 48 (LTPSIITLVAMAASVFLLAY). Topologically, residues 49 to 54 (AMKSLP) are cytoplasmic. The helical transmembrane segment at 55 to 77 (AGTAYAVWTGIGAVGTAILGIVL) threads the bilayer. At 78 to 81 (LGES) the chain is on the periplasmic side. Residues 82 to 100 (ASLARILSLGLILAGIIGL) form a helical membrane-spanning segment. The Cytoplasmic segment spans residues 101–104 (KLAS).

This sequence belongs to the drug/metabolite transporter (DMT) superfamily. Small multidrug resistance (SMR) (TC 2.A.7.1) family. Gdx/SugE subfamily.

The protein localises to the cell inner membrane. In terms of biological role, guanidinium ion exporter. Couples guanidinium export to the proton motive force, exchanging one guanidinium ion for two protons. This is Guanidinium exporter from Yersinia pestis.